The following is a 200-amino-acid chain: Small ribosomal subunit protein uS4 (200 aa).

A disordered region spans residues 22–42 (TGKELEKRPYAPGPHGPNQRK). The S4 RNA-binding domain occupies 92-152 (ARLDNLVYRM…EKSNNLVVVK (61 aa)).

Belongs to the universal ribosomal protein uS4 family. As to quaternary structure, part of the 30S ribosomal subunit. Contacts protein S5. The interaction surface between S4 and S5 is involved in control of translational fidelity.

Its function is as follows. One of the primary rRNA binding proteins, it binds directly to 16S rRNA where it nucleates assembly of the body of the 30S subunit. Functionally, with S5 and S12 plays an important role in translational accuracy. This Bacillus cereus (strain Q1) protein is Small ribosomal subunit protein uS4.